Reading from the N-terminus, the 67-residue chain is Probable tautomerase K2 (67 aa).

Residue Pro-2 is the Proton acceptor; via imino nitrogen of the active site.

This sequence belongs to the 4-oxalocrotonate tautomerase family.

The polypeptide is Probable tautomerase K2 (Dickeya dadantii (strain 3937) (Erwinia chrysanthemi (strain 3937))).